The chain runs to 159 residues: Cytochrome c-type biogenesis protein CcmE (159 aa).

Residues 1–8 (MNIRRKNR) lie on the Cytoplasmic side of the membrane. The helical; Signal-anchor for type II membrane protein transmembrane segment at 9–29 (LWIACAVLAGLALTIGLVLYA) threads the bilayer. Residues 30 to 159 (LRSNIDLFYT…PASVYKDPAS (130 aa)) lie on the Periplasmic side of the membrane. Heme is bound by residues His130 and Tyr134. The span at 132–147 (ENYTPPEVEKAMEANH) shows a compositional bias: basic and acidic residues. The segment at 132 to 159 (ENYTPPEVEKAMEANHRRPASVYKDPAS) is disordered.

The protein belongs to the CcmE/CycJ family.

The protein localises to the cell inner membrane. In terms of biological role, heme chaperone required for the biogenesis of c-type cytochromes. Transiently binds heme delivered by CcmC and transfers the heme to apo-cytochromes in a process facilitated by CcmF and CcmH. The sequence is that of Cytochrome c-type biogenesis protein CcmE from Shigella sonnei (strain Ss046).